Reading from the N-terminus, the 423-residue chain is UPF0229 protein Pmen_4018 (423 aa).

Positions His65–Glu108 are disordered.

Belongs to the UPF0229 family.

This chain is UPF0229 protein Pmen_4018, found in Ectopseudomonas mendocina (strain ymp) (Pseudomonas mendocina).